Consider the following 392-residue polypeptide: MLRWLTAGESHGPALVALLEGVPAGVEVTTEEIAGELARRRLGYGRGARMAFEQDEIEIIGGLRHGVTLGSPVAIRVGNSEWPKWRTVMAPDPVDSTELAGQARNAPLTRPRPGHADLAGMQKYGHTDARPILERASARETAARVAVGTVAKALLRQALGIEVVSHVVELGTVATKPGLRPSPADGDRIDADPLRCLDPEASVRMVAEVDAAKKDADTLGGVVEVLAYGVPPGLGSHVQWDRKLDARLATALMSIQAIKGVEIGDGWQQARSRGSVAHDEIIPTATGVRRVTDRAGGLEGGITTGEPLRVRAAMKPISSLNRALSTVDITSGEPATAINQRSDVCAVPAAGVVAEAMVALVLAEAAVEKFGGDSVVEQRRNLAGYLDALVVR.

Residues Arg-40 and Arg-46 each coordinate NADP(+). Residues 135–137 (RAS), 256–257 (QA), Gly-300, 315–319 (KPISS), and Arg-341 each bind FMN.

The protein belongs to the chorismate synthase family. As to quaternary structure, homotetramer. It depends on FMNH2 as a cofactor.

The catalysed reaction is 5-O-(1-carboxyvinyl)-3-phosphoshikimate = chorismate + phosphate. It participates in metabolic intermediate biosynthesis; chorismate biosynthesis; chorismate from D-erythrose 4-phosphate and phosphoenolpyruvate: step 7/7. Its function is as follows. Catalyzes the anti-1,4-elimination of the C-3 phosphate and the C-6 proR hydrogen from 5-enolpyruvylshikimate-3-phosphate (EPSP) to yield chorismate, which is the branch point compound that serves as the starting substrate for the three terminal pathways of aromatic amino acid biosynthesis. This reaction introduces a second double bond into the aromatic ring system. The protein is Chorismate synthase of Salinispora tropica (strain ATCC BAA-916 / DSM 44818 / JCM 13857 / NBRC 105044 / CNB-440).